The primary structure comprises 99 residues: A-type ATP synthase subunit F (99 aa).

Belongs to the V-ATPase F subunit family. As to quaternary structure, has multiple subunits with at least A(3), B(3), C, D, E, F, H, I and proteolipid K(x).

It localises to the cell membrane. Its function is as follows. Component of the A-type ATP synthase that produces ATP from ADP in the presence of a proton gradient across the membrane. This chain is A-type ATP synthase subunit F, found in Methanococcus maripaludis (strain C7 / ATCC BAA-1331).